The sequence spans 460 residues: Benzyl alcohol O-benzoyltransferase (460 aa).

Active-site proton acceptor residues include His167 and Asp382.

The protein belongs to the plant acyltransferase family.

The catalysed reaction is benzyl alcohol + benzoyl-CoA = benzyl benzoate + CoA. Its function is as follows. Probably involved in the formation of volatile ester benzylbenzoate. The protein is Benzyl alcohol O-benzoyltransferase (HSR201) of Nicotiana tabacum (Common tobacco).